The sequence spans 447 residues: Polyamine export protein (447 aa).

Over M1–S4 the chain is Cytoplasmic. The 197-residue stretch at M1–E197 folds into the CNNM transmembrane domain. The helical transmembrane segment at I5 to L25 threads the bilayer. The Periplasmic portion of the chain corresponds to A26 to P54. The chain crosses the membrane as a helical span at residues G55–V75. Topologically, residues G76–Q99 are cytoplasmic. A helical transmembrane segment spans residues L100 to T120. Residues P121–R141 are Periplasmic-facing. The chain crosses the membrane as a helical span at residues F142–F162. The Cytoplasmic segment spans residues R163–A447. CBS domains follow at residues M216–M275 and Q282–E343.

This sequence belongs to the UPF0053 family. PaeA subfamily.

Its subcellular location is the cell inner membrane. Involved in cadaverine and putrescine tolerance in stationary phase. May facilitate the efflux of both cadaverine and putrescine from the cytoplasm, reducing potentially toxic levels under certain stress conditions. The protein is Polyamine export protein of Salmonella typhimurium (strain 14028s / SGSC 2262).